Here is a 207-residue protein sequence, read N- to C-terminus: Large ribosomal subunit protein bL25 (207 aa).

Residues 186-207 (SKPRGGAGAEGEADAEGEAAAE) are disordered. Over residues 196 to 207 (GEADAEGEAAAE) the composition is skewed to acidic residues.

It belongs to the bacterial ribosomal protein bL25 family. CTC subfamily. Part of the 50S ribosomal subunit; part of the 5S rRNA/L5/L18/L25 subcomplex. Contacts the 5S rRNA. Binds to the 5S rRNA independently of L5 and L18.

Functionally, this is one of the proteins that binds to the 5S RNA in the ribosome where it forms part of the central protuberance. This chain is Large ribosomal subunit protein bL25, found in Methylobacillus flagellatus (strain ATCC 51484 / DSM 6875 / VKM B-1610 / KT).